The chain runs to 110 residues: UPF0122 protein STER_0914 (110 aa).

It belongs to the UPF0122 family.

Might take part in the signal recognition particle (SRP) pathway. This is inferred from the conservation of its genetic proximity to ftsY/ffh. May be a regulatory protein. This Streptococcus thermophilus (strain ATCC BAA-491 / LMD-9) protein is UPF0122 protein STER_0914.